A 222-amino-acid chain; its full sequence is Glutathione S-transferase A4 (222 aa).

M1 is subject to N-acetylmethionine. In terms of domain architecture, GST N-terminal spans 3–83 (AKPKLYYFNG…YLAAKYNLYG (81 aa)). Residues Y9, 53-55 (GQV), and 66-68 (TQT) contribute to the glutathione site. The 124-residue stretch at 85–208 (DLKERVRIDM…QPGSQRKPPP (124 aa)) folds into the GST C-terminal domain.

Belongs to the GST superfamily. Alpha family. In terms of assembly, homodimer. The N-terminus is blocked.

The protein resides in the cytoplasm. It catalyses the reaction RX + glutathione = an S-substituted glutathione + a halide anion + H(+). Functionally, conjugation of reduced glutathione to a wide number of exogenous and endogenous hydrophobic electrophiles. The polypeptide is Glutathione S-transferase A4 (Gsta4) (Mus musculus (Mouse)).